The primary structure comprises 176 residues: Large ribosomal subunit protein uL6 (176 aa).

It belongs to the universal ribosomal protein uL6 family. In terms of assembly, part of the 50S ribosomal subunit.

This protein binds to the 23S rRNA, and is important in its secondary structure. It is located near the subunit interface in the base of the L7/L12 stalk, and near the tRNA binding site of the peptidyltransferase center. The protein is Large ribosomal subunit protein uL6 of Thiobacillus denitrificans (strain ATCC 25259 / T1).